The sequence spans 292 residues: RWD domain-containing protein 2A (292 aa).

One can recognise an RWD domain in the interval leucine 14 to tyrosine 134.

In Homo sapiens (Human), this protein is RWD domain-containing protein 2A (RWDD2A).